The chain runs to 326 residues: MTTPMKIDKVSIVIPVYNEQESLPELMRRTVAACEQLDAAYEILLVDDGSSDDSAAVLTAAAEAPGSHIVAVLLNRNYGQHSAIMAGFSHVTGDLVVTLDADLQNPPEEIPRLVEVAAQDYDVVGTVRQNRQDSWFRKRASRMINALIQRTTGKAMGDYGCMLRAYRRHIIDAMLHCHERSTFIPILANTFARKTIEIPVMHSEREFGDSKYSLMKLVNLMYDLVTCLTTTPLRMLSVIGSMIALLGFAFSLLLITLRLFLGSHWAAEGVFMLFAVLFIFIGAQFIGMGLLGEYIGRIYNDVRARPRYFVQCVVSQNPLSSQQETQ.

2 helical membrane passes run 235–255 (MLSVIGSMIALLGFAFSLLLI) and 270–290 (VFMLFAVLFIFIGAQFIGMGL).

It belongs to the glycosyltransferase 2 family.

It is found in the cell inner membrane. The catalysed reaction is UDP-4-deoxy-4-formamido-beta-L-arabinose + di-trans,octa-cis-undecaprenyl phosphate = 4-deoxy-4-formamido-alpha-L-arabinopyranosyl di-trans,octa-cis-undecaprenyl phosphate + UDP. It functions in the pathway glycolipid biosynthesis; 4-amino-4-deoxy-alpha-L-arabinose undecaprenyl phosphate biosynthesis; 4-amino-4-deoxy-alpha-L-arabinose undecaprenyl phosphate from UDP-4-deoxy-4-formamido-beta-L-arabinose and undecaprenyl phosphate: step 1/2. Its pathway is bacterial outer membrane biogenesis; lipopolysaccharide biosynthesis. In terms of biological role, catalyzes the transfer of 4-deoxy-4-formamido-L-arabinose from UDP to undecaprenyl phosphate. The modified arabinose is attached to lipid A and is required for resistance to polymyxin and cationic antimicrobial peptides. The sequence is that of Undecaprenyl-phosphate 4-deoxy-4-formamido-L-arabinose transferase from Sodalis glossinidius (strain morsitans).